Reading from the N-terminus, the 783-residue chain is Tricorn protease-interacting factor F2 (783 aa).

Residues E107 and 236-240 each bind substrate; that span reads GAMEN. H271 lines the Zn(2+) pocket. The Proton acceptor role is filled by E272. 2 residues coordinate Zn(2+): H275 and E294.

Belongs to the peptidase M1 family. Monomer. Part of the Tricorn proteolytic complex. Requires Zn(2+) as cofactor.

It is found in the cytoplasm. In terms of biological role, proteases F1, F2 and F3 degrade oligopeptides produced by Tricorn (themselves probably produced by the proteasome), yielding free amino acids. This is Tricorn protease-interacting factor F2 (trf2) from Thermoplasma acidophilum (strain ATCC 25905 / DSM 1728 / JCM 9062 / NBRC 15155 / AMRC-C165).